A 204-amino-acid chain; its full sequence is Peptide deformylase (204 aa).

The Fe cation site is built by Cys-131 and His-174. The active site involves Glu-175. Fe cation is bound at residue His-178.

This sequence belongs to the polypeptide deformylase family. Requires Fe(2+) as cofactor.

It carries out the reaction N-terminal N-formyl-L-methionyl-[peptide] + H2O = N-terminal L-methionyl-[peptide] + formate. Removes the formyl group from the N-terminal Met of newly synthesized proteins. Requires at least a dipeptide for an efficient rate of reaction. N-terminal L-methionine is a prerequisite for activity but the enzyme has broad specificity at other positions. This is Peptide deformylase from Streptococcus pyogenes serotype M49 (strain NZ131).